Here is a 1508-residue protein sequence, read N- to C-terminus: Calponin homology domain-containing protein DDB_G0272472 (1508 aa).

Disordered stretches follow at residues 1–165, 197–290, 309–518, 531–561, 680–706, and 1036–1391; these read MFRN…KNDF, DSEE…NLSP, DFKS…TSIV, AANATTTNNDNNNNNNNTSSPTNKSTNLFND, KEKQDQLEKQRKLEQQRLQKEKDEKEL, and KIEK…KKSA. Residues 81–107 are compositionally biased toward low complexity; it reads SSSPSTSTTTTTKSSSTTTTTTTSSSS. Positions 208–222 are enriched in basic and acidic residues; the sequence is PIKKKQSNDLEKNIF. 3 stretches are compositionally biased toward low complexity: residues 234–251, 263–290, and 315–332; these read KQSTVTKPKQPQQQQKQP, FGDSSLSLDSPLLASKSSPPKSSVNLSP, and SNNTTTVKKAVPISKSKP. 2 stretches are compositionally biased toward basic and acidic residues: residues 337 to 346 and 362 to 371; these read QKEEIKEVST and VDEKPKERST. A compositionally biased stretch (polar residues) spans 380–391; sequence KTVTVKSNNSFE. Positions 395–438 are enriched in low complexity; it reads FGSTTTNDDGGDNDFSFTPATTPSSSSSTKATTTSPSSTTTTKS. The span at 439–452 shows a compositional bias: polar residues; the sequence is NINIGQKSNKSVDQ. Residues 455–498 are a coiled coil; sequence QFLNDIFQQEEQDKKRREEEAKLKQQQKQKEKEQIKDEIDDLFK. Residues 465-498 show a composition bias toward basic and acidic residues; sequence EQDKKRREEEAKLKQQQKQKEKEQIKDEIDDLFK. Composition is skewed to low complexity over residues 500–516 and 531–557; these read SKPTTTTTSTPSKSTTS and AANATTTNNDNNNNNNNTSSPTNKSTN. A compositionally biased stretch (basic and acidic residues) spans 1036–1164; the sequence is KIEKEKEERD…DQEEKEKQLK (129 aa). Composition is skewed to low complexity over residues 1165-1181 and 1189-1206; these read EQQQQQKVIIPTTTTTT and DSDALLNLPDSASSSSHS. Over residues 1216 to 1225 the composition is skewed to basic residues; sequence SKAKGRKKPT. Basic and acidic residues predominate over residues 1226-1235; that stretch reads RRELTKDGNR. The segment covering 1333–1355 has biased composition (low complexity); sequence PTVTQTTTTTTTPPTTPPSSSVQ. Residues 1362–1374 show a composition bias toward polar residues; it reads RSFSGSSFMGINS. Residues 1397 to 1504 enclose the Calponin-homology (CH) domain; that stretch reads MKALDVLLQW…YLSEFFKVMK (108 aa).

The sequence is that of Calponin homology domain-containing protein DDB_G0272472 from Dictyostelium discoideum (Social amoeba).